The sequence spans 349 residues: DNA polymerase IV (349 aa).

The UmuC domain maps to 7 to 188; that stretch reads IIHIDMDYFF…LPVKKLFGVG (182 aa). Residues Asp-11 and Asp-106 each coordinate Mg(2+). The active site involves Glu-107.

It belongs to the DNA polymerase type-Y family. Monomer. It depends on Mg(2+) as a cofactor.

The protein resides in the cytoplasm. It catalyses the reaction DNA(n) + a 2'-deoxyribonucleoside 5'-triphosphate = DNA(n+1) + diphosphate. Functionally, poorly processive, error-prone DNA polymerase involved in untargeted mutagenesis. Copies undamaged DNA at stalled replication forks, which arise in vivo from mismatched or misaligned primer ends. These misaligned primers can be extended by PolIV. Exhibits no 3'-5' exonuclease (proofreading) activity. May be involved in translesional synthesis, in conjunction with the beta clamp from PolIII. In Francisella tularensis subsp. novicida (strain U112), this protein is DNA polymerase IV.